The sequence spans 218 residues: Pyridoxal 5'-phosphate synthase subunit PdxT (218 aa).

54-56 (GES) is a binding site for L-glutamine. C86 acts as the Nucleophile in catalysis. Residues R120 and 149–150 (IR) contribute to the L-glutamine site. Catalysis depends on charge relay system residues H197 and E199.

This sequence belongs to the glutaminase PdxT/SNO family. In terms of assembly, in the presence of PdxS, forms a dodecamer of heterodimers. Only shows activity in the heterodimer.

It carries out the reaction aldehydo-D-ribose 5-phosphate + D-glyceraldehyde 3-phosphate + L-glutamine = pyridoxal 5'-phosphate + L-glutamate + phosphate + 3 H2O + H(+). The enzyme catalyses L-glutamine + H2O = L-glutamate + NH4(+). Its pathway is cofactor biosynthesis; pyridoxal 5'-phosphate biosynthesis. In terms of biological role, catalyzes the hydrolysis of glutamine to glutamate and ammonia as part of the biosynthesis of pyridoxal 5'-phosphate. The resulting ammonia molecule is channeled to the active site of PdxS. The sequence is that of Pyridoxal 5'-phosphate synthase subunit PdxT from Saccharopolyspora erythraea (strain ATCC 11635 / DSM 40517 / JCM 4748 / NBRC 13426 / NCIMB 8594 / NRRL 2338).